A 494-amino-acid polypeptide reads, in one-letter code: Protein nucleotidyltransferase YdiU (494 aa).

Positions 90, 92, 93, 113, 125, 126, 176, and 183 each coordinate ATP. Asp-252 acts as the Proton acceptor in catalysis. Mg(2+) contacts are provided by Asn-253 and Asp-262. Asp-262 serves as a coordination point for ATP.

Belongs to the SELO family. The cofactor is Mg(2+). Requires Mn(2+) as cofactor.

The enzyme catalyses L-seryl-[protein] + ATP = 3-O-(5'-adenylyl)-L-seryl-[protein] + diphosphate. The catalysed reaction is L-threonyl-[protein] + ATP = 3-O-(5'-adenylyl)-L-threonyl-[protein] + diphosphate. It carries out the reaction L-tyrosyl-[protein] + ATP = O-(5'-adenylyl)-L-tyrosyl-[protein] + diphosphate. It catalyses the reaction L-histidyl-[protein] + UTP = N(tele)-(5'-uridylyl)-L-histidyl-[protein] + diphosphate. The enzyme catalyses L-seryl-[protein] + UTP = O-(5'-uridylyl)-L-seryl-[protein] + diphosphate. The catalysed reaction is L-tyrosyl-[protein] + UTP = O-(5'-uridylyl)-L-tyrosyl-[protein] + diphosphate. Its function is as follows. Nucleotidyltransferase involved in the post-translational modification of proteins. It can catalyze the addition of adenosine monophosphate (AMP) or uridine monophosphate (UMP) to a protein, resulting in modifications known as AMPylation and UMPylation. This chain is Protein nucleotidyltransferase YdiU, found in Alkalilimnicola ehrlichii (strain ATCC BAA-1101 / DSM 17681 / MLHE-1).